Here is a 225-residue protein sequence, read N- to C-terminus: Cytidylate kinase (225 aa).

11–19 (GPAAAGKST) is a binding site for ATP.

The protein belongs to the cytidylate kinase family. Type 1 subfamily.

The protein localises to the cytoplasm. It catalyses the reaction CMP + ATP = CDP + ADP. The enzyme catalyses dCMP + ATP = dCDP + ADP. The chain is Cytidylate kinase from Bacillus cytotoxicus (strain DSM 22905 / CIP 110041 / 391-98 / NVH 391-98).